Reading from the N-terminus, the 314-residue chain is Protoheme IX farnesyltransferase (314 aa).

7 helical membrane passes run 58–78, 107–127, 130–150, 173–193, 227–247, 248–268, and 294–314; these read LWLV…ASVF, AALV…YVWV, LSAA…TMLL, WTAV…VVFF, VGRQ…LLWP, VAGT…VFLL, and SSNL…LLAG.

It belongs to the UbiA prenyltransferase family. Protoheme IX farnesyltransferase subfamily.

The protein localises to the cell membrane. The catalysed reaction is heme b + (2E,6E)-farnesyl diphosphate + H2O = Fe(II)-heme o + diphosphate. Its pathway is porphyrin-containing compound metabolism; heme O biosynthesis; heme O from protoheme: step 1/1. Its function is as follows. Converts heme B (protoheme IX) to heme O by substitution of the vinyl group on carbon 2 of heme B porphyrin ring with a hydroxyethyl farnesyl side group. The sequence is that of Protoheme IX farnesyltransferase from Nocardioides sp. (strain ATCC BAA-499 / JS614).